The sequence spans 106 residues: Iron-sulfur cluster assembly protein CyaY (106 aa).

This sequence belongs to the frataxin family.

Involved in iron-sulfur (Fe-S) cluster assembly. May act as a regulator of Fe-S biogenesis. This Pectobacterium carotovorum subsp. carotovorum (strain PC1) protein is Iron-sulfur cluster assembly protein CyaY.